The following is an 899-amino-acid chain: Protein translocase subunit SecA (899 aa).

ATP-binding positions include Q87, G105–T109, and D516. Residues C884, C886, C895, and H896 each contribute to the Zn(2+) site.

Belongs to the SecA family. In terms of assembly, monomer and homodimer. Part of the essential Sec protein translocation apparatus which comprises SecA, SecYEG and auxiliary proteins SecDF. Other proteins may also be involved. Zn(2+) is required as a cofactor.

The protein resides in the cell inner membrane. It localises to the cytoplasm. The catalysed reaction is ATP + H2O + cellular proteinSide 1 = ADP + phosphate + cellular proteinSide 2.. Functionally, part of the Sec protein translocase complex. Interacts with the SecYEG preprotein conducting channel. Has a central role in coupling the hydrolysis of ATP to the transfer of proteins into and across the cell membrane, serving as an ATP-driven molecular motor driving the stepwise translocation of polypeptide chains across the membrane. The polypeptide is Protein translocase subunit SecA (Borreliella burgdorferi (strain ZS7) (Borrelia burgdorferi)).